We begin with the raw amino-acid sequence, 183 residues long: NADH-quinone oxidoreductase subunit A (183 aa).

A run of 3 helical transmembrane segments spans residues 11–31 (IIAFVIGVTFLCVFMLTVPLL), 63–83 (FYLVAIFFVVFDLEALYLYAW), and 98–118 (VVIFVVDLLIALVYAFSVGAL). The segment at 159–183 (TGQIPAQSSGRVKSKTTPALSSEKE) is disordered.

Belongs to the complex I subunit 3 family. NDH-1 is composed of 14 different subunits. Subunits NuoA, H, J, K, L, M, N constitute the membrane sector of the complex.

It localises to the cell inner membrane. It catalyses the reaction a quinone + NADH + 5 H(+)(in) = a quinol + NAD(+) + 4 H(+)(out). In terms of biological role, NDH-1 shuttles electrons from NADH, via FMN and iron-sulfur (Fe-S) centers, to quinones in the respiratory chain. The immediate electron acceptor for the enzyme in this species is believed to be ubiquinone. Couples the redox reaction to proton translocation (for every two electrons transferred, four hydrogen ions are translocated across the cytoplasmic membrane), and thus conserves the redox energy in a proton gradient. This Acinetobacter baumannii (strain AYE) protein is NADH-quinone oxidoreductase subunit A.